Here is a 1577-residue protein sequence, read N- to C-terminus: MAP kinase-activating death domain protein (1577 aa).

The 255-residue stretch at 13–267 folds into the uDENN domain; that stretch reads YLVIVGARHP…VPVSGQKRVD (255 aa). Residues 106-121 are compositionally biased toward basic and acidic residues; sequence KEKVEGGAGPRGKEGA. Residues 106–166 are disordered; that stretch reads KEKVEGGAGP…WGKRRAKAGS (61 aa). Low complexity predominate over residues 123–140; it reads TSGASEEAATGSSESGST. A compositionally biased stretch (polar residues) spans 141–156; it reads LQPPSADSTPDINQSP. The residue at position 155 (Ser155) is a Phosphoserine. The region spanning 288-428 is the cDENN domain; it reads RFTLVDFPLH…ESLELKKHLK (141 aa). The region spanning 430–564 is the dDENN domain; that stretch reads ALASMSLNTQ…LNPSNYAFQR (135 aa). 2 disordered regions span residues 604 to 635 and 676 to 840; these read LSVPPERDSDSDPTEDSGSDSQDYDDSSSSYS and QPQK…NSTE. The segment covering 614 to 629 has biased composition (acidic residues); sequence SDPTEDSGSDSQDYDD. Ser688 and Ser691 each carry phosphoserine. Residues 688–698 are compositionally biased toward polar residues; it reads SENSQENPPLR. Residues 699–715 are compositionally biased toward low complexity; sequence SSSSTTASSSPSTVVHS. A compositionally biased stretch (polar residues) spans 793-803; sequence PRFSQHVSGSR. Residues Ser812, Ser817, and Ser819 each carry the phosphoserine modification. Positions 826-839 are enriched in low complexity; that stretch reads RASSPNSTVSNNST. A phosphoserine mark is found at Ser857, Ser861, Ser915, Ser920, Ser929, and Ser1058. Disordered regions lie at residues 912–940, 1050–1109, and 1127–1272; these read QKSSVIKHSPTVKREPSSPQGRSSNSSEN, KEPD…DTRS, and EVKK…RSSE. Over residues 928–938 the composition is skewed to low complexity; that stretch reads SSPQGRSSNSS. Phosphothreonine is present on residues Thr1060 and Thr1065. The residue at position 1109 (Ser1109) is a Phosphoserine. A compositionally biased stretch (basic and acidic residues) spans 1127–1141; it reads EVKKQKALEKQRPEG. Polar residues predominate over residues 1157-1172; sequence QMSADSGVSLTSASQR. The span at 1189-1203 shows a compositional bias: low complexity; that stretch reads SSSQDSEVSTVSNSS. The span at 1232–1248 shows a compositional bias: polar residues; sequence SRATLSDSEIETNSATS. Thr1235 carries the post-translational modification Phosphothreonine. Residues Ser1237 and Ser1266 each carry the phosphoserine modification. A Death domain is found at 1336 to 1411; it reads GMDQGPQEMI…GLVYSQQVNE (76 aa).

It belongs to the MADD family. Interacts (via death domain) with TNFRSF1A (via death domain). Interacts with PIDD1. Interacts with YWHAZ. Interacts (via death domain) with KIF1B; links the motor KIF1B to Rab3-carrying vesicles in anterograde synaptic vesicle transport. Interacts with KIF1A. Interacts (via uDENN domain) with RAB3A, RAB3B, RAB3C and RAB3D; the GTP-bound form of the Rab proteins is preferred for interaction. Expressed in the brain.

The protein resides in the cell membrane. It localises to the cytoplasm. Its subcellular location is the cell projection. It is found in the axon. In terms of biological role, guanyl-nucleotide exchange factor that regulates small GTPases of the Rab family. Converts GDP-bound inactive form of RAB27A and RAB27B to the GTP-bound active forms. Converts GDP-bound inactive form of RAB3A, RAB3C and RAB3D to the GTP-bound active forms, GTPases involved in synaptic vesicle exocytosis and vesicle secretion. Plays a role in synaptic vesicle formation and in vesicle trafficking at the neuromuscular junction. Involved in up-regulating a post-docking step of synaptic exocytosis in central synapses. Probably by binding to the motor proteins KIF1B and KIF1A, mediates motor-dependent transport of GTP-RAB3A-positive vesicles to the presynaptic nerve terminals. Plays a role in TNFA-mediated activation of the MAPK pathway, including ERK1/2. May link TNFRSF1A with MAP kinase activation. May be involved in the regulation of TNFA-induced apoptosis. This is MAP kinase-activating death domain protein from Mus musculus (Mouse).